A 172-amino-acid polypeptide reads, in one-letter code: Keratin-associated protein 13-3 (172 aa).

5 consecutive repeat copies span residues 46 to 55 (CQLGSSLYRG), 56 to 65 (CQETCWRPNS), 66 to 75 (CQTLCVESSP), 76 to 85 (CHTSCYYPRT), and 92 to 101 (CLTMHVGSRG). The 5 X 10 AA approximate repeats stretch occupies residues 46–101 (CQLGSSLYRGCQETCWRPNSCQTLCVESSPCHTSCYYPRTHMLCNSCLTMHVGSRG).

It belongs to the PMG family. In terms of assembly, interacts with hair keratins.

In the hair cortex, hair keratin intermediate filaments are embedded in an interfilamentous matrix, consisting of hair keratin-associated proteins (KRTAP), which are essential for the formation of a rigid and resistant hair shaft through their extensive disulfide bond cross-linking with abundant cysteine residues of hair keratins. The matrix proteins include the high-sulfur and high-glycine-tyrosine keratins. The sequence is that of Keratin-associated protein 13-3 (KRTAP13-3) from Homo sapiens (Human).